The primary structure comprises 348 residues: Probable dual-specificity RNA methyltransferase RlmN (348 aa).

The Proton acceptor role is filled by glutamate 89. Residues 95 to 330 (ERDHYTLCVS…NFVRFSKGVE (236 aa)) form the Radical SAM core domain. A disulfide bond links cysteine 102 and cysteine 335. Cysteine 109, cysteine 113, and cysteine 116 together coordinate [4Fe-4S] cluster. Residues 157–158 (GE), serine 189, 214–216 (SLN), and asparagine 292 each bind S-adenosyl-L-methionine. The S-methylcysteine intermediate role is filled by cysteine 335.

This sequence belongs to the radical SAM superfamily. RlmN family. The cofactor is [4Fe-4S] cluster.

The protein resides in the cytoplasm. The enzyme catalyses adenosine(2503) in 23S rRNA + 2 reduced [2Fe-2S]-[ferredoxin] + 2 S-adenosyl-L-methionine = 2-methyladenosine(2503) in 23S rRNA + 5'-deoxyadenosine + L-methionine + 2 oxidized [2Fe-2S]-[ferredoxin] + S-adenosyl-L-homocysteine. The catalysed reaction is adenosine(37) in tRNA + 2 reduced [2Fe-2S]-[ferredoxin] + 2 S-adenosyl-L-methionine = 2-methyladenosine(37) in tRNA + 5'-deoxyadenosine + L-methionine + 2 oxidized [2Fe-2S]-[ferredoxin] + S-adenosyl-L-homocysteine. Its function is as follows. Specifically methylates position 2 of adenine 2503 in 23S rRNA and position 2 of adenine 37 in tRNAs. The polypeptide is Probable dual-specificity RNA methyltransferase RlmN (Aquifex aeolicus (strain VF5)).